The chain runs to 1139 residues: Integrin alpha ina-1 (1139 aa).

An N-terminal signal peptide occupies residues 1–19; it reads MRECIISWTLLLCLSCVKS. The Extracellular portion of the chain corresponds to 20-1084; that stretch reads FNLDVNAPIY…PTIGDSRPIP (1065 aa). One copy of the FG-GAP 1 repeat lies at 21-85; the sequence is NLDVNAPIYR…CDINTFYNGG (65 aa). N108 and N136 each carry an N-linked (GlcNAc...) asparagine glycan. 6 FG-GAP repeats span residues 111 to 171, 180 to 231, 242 to 302, 307 to 370, 378 to 438, and 448 to 510; these read RGRT…LQST, LPTT…IFDS, NGDM…SSSK, EDKF…QRKQ, HPPK…IEKF, and GNDL…MEKR. N-linked (GlcNAc...) asparagine glycosylation is present at N313. N580, N788, N851, and N1026 each carry an N-linked (GlcNAc...) asparagine glycan. The chain crosses the membrane as a helical span at residues 1085–1106; the sequence is WWIYVIAAVIGVLILSLIIICL. Residues 1107–1139 are Cytoplasmic-facing; sequence SKCGFFKRNRLDQPSLYTAQLKHEREEWADTGL.

Belongs to the integrin alpha chain family. In terms of assembly, heterodimer of an alpha and a beta subunit. Alpha ina-1 associates with beta pat-3. Interacts (via cytoplasmic domain) with src-1 (when phosphorylated at 'Tyr-416').

The protein resides in the membrane. The protein localises to the cell projection. Its subcellular location is the phagocytic cup. It is found in the cytoplasmic vesicle. It localises to the phagosome membrane. Plays a role in cell migration, axon fasciculation, and morphogenesis. During gonad morphogenesis, involved in distal tip cell (DTC)-mediated guidance of gonad elongation, in maintaining their sharp tapering morphology and in their migration. Involved in the anterior-posterior positioning of QR neuroblast descendants by regulating the migratory speed of QR.p. Probably by acting as a receptor for apoptotic cells, plays a role in the clearance of apoptotic cells during mid-embryogenesis. The protein is Integrin alpha ina-1 (ina-1) of Caenorhabditis elegans.